An 809-amino-acid chain; its full sequence is Poly(A) polymerase (809 aa).

The disordered stretch occupies residues 1–50 (MNKNGGPPVANITTSSTTITSTTTTQAKSQLPSSLSVNNLHTTQGSTDQP). Positions 12–25 (ITTSSTTITSTTTT) are enriched in low complexity. The span at 26-50 (QAKSQLPSSLSVNNLHTTQGSTDQP) shows a compositional bias: polar residues. Residues 133 to 135 (FGS), 146 to 148 (DID), Asp200, Lys262, Tyr271, and 280 to 281 (GV) contribute to the ATP site. Positions 146, 148, and 200 each coordinate Mg(2+). Disordered stretches follow at residues 529-760 (FVKD…QQIQ) and 785-809 (ISSSSETSQSKPPPKKPTISIIRGN). The segment covering 530–540 (VKDEGPEEPVK) has biased composition (basic and acidic residues). Residues 572-655 (SPITTNINST…TPPTTTTINS (84 aa)) are compositionally biased toward low complexity. Positions 656–665 (VQPPSAQPTE) are enriched in polar residues. The segment covering 666–706 (NGSSTSNSPTSTSINNTALPPNPTTNSESTIETTITLPTTL) has biased composition (low complexity). Residues 707-735 (ESQTSTLKDSNEISTNGTAVATEPTITSP) are compositionally biased toward polar residues. Composition is skewed to low complexity over residues 736–760 (SVNINESSTSTSTTTTTTVTEQQIQ) and 785–794 (ISSSSETSQS).

Belongs to the poly(A) polymerase family. It depends on Mg(2+) as a cofactor. Requires Mn(2+) as cofactor.

It is found in the nucleus. The enzyme catalyses RNA(n) + ATP = RNA(n)-3'-adenine ribonucleotide + diphosphate. Its function is as follows. Polymerase that creates the 3'-poly(A) tail of mRNA's. May acquire specificity through interaction with a cleavage and polyadenylation factor. In Dictyostelium discoideum (Social amoeba), this protein is Poly(A) polymerase (papA).